Reading from the N-terminus, the 361-residue chain is MSKFSFNIHHQHKKARSGIIVTAHGEMRTPAFMPVGTRGTVKAMLPESVAETGADILLGNTYHLMLQPTAERIVQLGGLHKFMNWDKPILTDSGGFQVMSLSKLCKITEEGVSFSSHINGDKYMLTPERSTEIQYLLGSTITMAFDECTPYPATFEEAKTSMQLTTRWANRSRNTFVKREGYAQFGIIQGSVYEELREQSAKDLVELDFDGYAIGGLAVGEGQELMFKVLDYAPDFLPQNKPRYLMGVGKPADIIGAVSRGIDMFDCVIPTRSGRNGQAFTKYGTVNIRNSKYADDNKPLEHDCLCPACRNYSKAYLHHLVRIGEILGSMLMTWHNLTYFQNLMSRIRAYIKLGKDFDFDS.

The active-site Proton acceptor is Asp-92. Substrate contacts are provided by residues 92 to 96, Asp-146, Gln-189, and Gly-216; that span reads DSGGF. The segment at 247 to 253 is RNA binding; that stretch reads GVGKPAD. Asp-266 (nucleophile) is an active-site residue. An RNA binding; important for wobble base 34 recognition region spans residues 271–275; the sequence is TRSGR. The Zn(2+) site is built by Cys-304, Cys-306, Cys-309, and His-335.

It belongs to the queuine tRNA-ribosyltransferase family. In terms of assembly, homodimer. Within each dimer, one monomer is responsible for RNA recognition and catalysis, while the other monomer binds to the replacement base PreQ1. It depends on Zn(2+) as a cofactor.

The enzyme catalyses 7-aminomethyl-7-carbaguanine + guanosine(34) in tRNA = 7-aminomethyl-7-carbaguanosine(34) in tRNA + guanine. The protein operates within tRNA modification; tRNA-queuosine biosynthesis. Its function is as follows. Catalyzes the base-exchange of a guanine (G) residue with the queuine precursor 7-aminomethyl-7-deazaguanine (PreQ1) at position 34 (anticodon wobble position) in tRNAs with GU(N) anticodons (tRNA-Asp, -Asn, -His and -Tyr). Catalysis occurs through a double-displacement mechanism. The nucleophile active site attacks the C1' of nucleotide 34 to detach the guanine base from the RNA, forming a covalent enzyme-RNA intermediate. The proton acceptor active site deprotonates the incoming PreQ1, allowing a nucleophilic attack on the C1' of the ribose to form the product. After dissociation, two additional enzymatic reactions on the tRNA convert PreQ1 to queuine (Q), resulting in the hypermodified nucleoside queuosine (7-(((4,5-cis-dihydroxy-2-cyclopenten-1-yl)amino)methyl)-7-deazaguanosine). The chain is Queuine tRNA-ribosyltransferase from Rickettsia rickettsii (strain Iowa).